We begin with the raw amino-acid sequence, 700 residues long: Acetyl-coenzyme A carboxylase carboxyl transferase subunit beta, chloroplastic (700 aa).

Positions 34, 37, 53, and 56 each coordinate Zn(2+). A C4-type zinc finger spans residues 34–56 (CENCETLIYKKSLLEQKGVCAEC). The CoA carboxyltransferase N-terminal domain occupies 445-700 (KKGRDTKDTE…ETIEIYMYGD (256 aa)).

The protein belongs to the AccD/PCCB family. As to quaternary structure, acetyl-CoA carboxylase is a heterohexamer composed of biotin carboxyl carrier protein, biotin carboxylase and 2 subunits each of ACCase subunit alpha and ACCase plastid-coded subunit beta (accD). It depends on Zn(2+) as a cofactor.

It is found in the plastid. The protein resides in the chloroplast stroma. The enzyme catalyses N(6)-carboxybiotinyl-L-lysyl-[protein] + acetyl-CoA = N(6)-biotinyl-L-lysyl-[protein] + malonyl-CoA. It functions in the pathway lipid metabolism; malonyl-CoA biosynthesis; malonyl-CoA from acetyl-CoA: step 1/1. In terms of biological role, component of the acetyl coenzyme A carboxylase (ACC) complex. Biotin carboxylase (BC) catalyzes the carboxylation of biotin on its carrier protein (BCCP) and then the CO(2) group is transferred by the transcarboxylase to acetyl-CoA to form malonyl-CoA. The polypeptide is Acetyl-coenzyme A carboxylase carboxyl transferase subunit beta, chloroplastic (Cryptomeria japonica (Japanese cedar)).